We begin with the raw amino-acid sequence, 283 residues long: NADH-ubiquinone oxidoreductase 30.4 kDa subunit, mitochondrial (283 aa).

The N-terminal 17 residues, 1–17 (MASKLCRSRALASALRS), are a transit peptide targeting the mitochondrion. The tract at residues 258–283 (GAGIDRKPESFKLPTPKPETKPEEKK) is disordered.

The protein belongs to the complex I 30 kDa subunit family. In terms of assembly, complex I is composed of about 40 different subunits. This is a component of the iron-sulfur protein fraction.

The protein localises to the mitochondrion inner membrane. It catalyses the reaction a ubiquinone + NADH + 5 H(+)(in) = a ubiquinol + NAD(+) + 4 H(+)(out). Core subunit of the mitochondrial membrane respiratory chain NADH dehydrogenase (Complex I) that is believed to belong to the minimal assembly required for catalysis. Complex I functions in the transfer of electrons from NADH to the respiratory chain. The immediate electron acceptor for the enzyme is believed to be ubiquinone. The chain is NADH-ubiquinone oxidoreductase 30.4 kDa subunit, mitochondrial (nuo-31) from Neurospora crassa (strain ATCC 24698 / 74-OR23-1A / CBS 708.71 / DSM 1257 / FGSC 987).